Here is a 594-residue protein sequence, read N- to C-terminus: Arginine--tRNA ligase (594 aa).

The 'HIGH' region motif lies at 139 to 149 (ANPTGPLHVGH).

This sequence belongs to the class-I aminoacyl-tRNA synthetase family. In terms of assembly, monomer.

The protein localises to the cytoplasm. The catalysed reaction is tRNA(Arg) + L-arginine + ATP = L-arginyl-tRNA(Arg) + AMP + diphosphate. In Burkholderia pseudomallei (strain 1106a), this protein is Arginine--tRNA ligase.